We begin with the raw amino-acid sequence, 263 residues long: Very long chain fatty acid elongase F (263 aa).

7 consecutive transmembrane segments (helical) span residues 10–30, 55–75, 98–118, 135–155, 159–179, 193–213, and 223–243; these read IPVFSDPWITMATLSGYLLFV, IFQILYNGLILVLGVHFLFVL, LICILYMLNKFVDLVETIFFV, FAMAFLGYLYYYFHGYGGVAF, LCLLNTAVHVIMYAYYYLSSI, ITIAQLVQFGIILLHCTITLA, and LTYGCGSLSAFFAVIFSQFYY.

Belongs to the ELO family. As to expression, no expression in adults.

The protein resides in the endoplasmic reticulum membrane. It carries out the reaction a very-long-chain acyl-CoA + malonyl-CoA + H(+) = a very-long-chain 3-oxoacyl-CoA + CO2 + CoA. In terms of biological role, condensing enzyme that elongates saturated and monounsaturated very long chain fatty acids, to yield products up to 30 carbons in length. This chain is Very long chain fatty acid elongase F, found in Drosophila simulans (Fruit fly).